We begin with the raw amino-acid sequence, 427 residues long: Trigger factor (427 aa).

The PPIase FKBP-type domain occupies 163-248; it reads GDTVVIDFVG…VHEVKAKEVP (86 aa).

This sequence belongs to the FKBP-type PPIase family. Tig subfamily.

Its subcellular location is the cytoplasm. The catalysed reaction is [protein]-peptidylproline (omega=180) = [protein]-peptidylproline (omega=0). In terms of biological role, involved in protein export. Acts as a chaperone by maintaining the newly synthesized protein in an open conformation. Functions as a peptidyl-prolyl cis-trans isomerase. This chain is Trigger factor, found in Streptococcus equi subsp. zooepidemicus (strain H70).